Reading from the N-terminus, the 685-residue chain is Multisite-specific tRNA:(cytosine-C(5))-methyltransferase trm4b (685 aa).

S-adenosyl-L-methionine contacts are provided by residues 167–173 (CAAPGSK), aspartate 208, aspartate 235, and aspartate 270. Cysteine 323 serves as the catalytic Nucleophile.

The protein belongs to the class I-like SAM-binding methyltransferase superfamily. RsmB/NOP family. TRM4 subfamily.

The protein localises to the nucleus. It catalyses the reaction cytidine(49) in tRNA precursor + S-adenosyl-L-methionine = 5-methylcytidine(49) in tRNA precursor + S-adenosyl-L-homocysteine + H(+). It carries out the reaction cytidine(50) in tRNA + S-adenosyl-L-methionine = 5-methylcytidine(50) in tRNA + S-adenosyl-L-homocysteine + H(+). The enzyme catalyses cytidine(60) in tRNA(Asp) + S-adenosyl-L-methionine = 5-methylcytidine(60) in tRNA(Asp) + S-adenosyl-L-homocysteine + H(+). The catalysed reaction is cytidine(61) in tRNA(Asp) + S-adenosyl-L-methionine = 5-methylcytidine(61) in tRNA(Asp) + S-adenosyl-L-homocysteine + H(+). It catalyses the reaction cytidine(62) in tRNA(Asp) + S-adenosyl-L-methionine = 5-methylcytidine(62) in tRNA(Asp) + S-adenosyl-L-homocysteine + H(+). TRNA cytosine C(5)-methyltransferase that methylates cytosine to 5-methylcytosine (m5C) in tRNAs at position 49 and 50. Trm4a and trm4b methylate different sets of tRNAs. Also methylates cytosine to m5C at positions (60, 61 and 62) in tRNA(Asp). The chain is Multisite-specific tRNA:(cytosine-C(5))-methyltransferase trm4b from Schizosaccharomyces pombe (strain 972 / ATCC 24843) (Fission yeast).